We begin with the raw amino-acid sequence, 119 residues long: Protein TusC (119 aa).

It belongs to the DsrF/TusC family. Heterohexamer, formed by a dimer of trimers. The hexameric TusBCD complex contains 2 copies each of TusB, TusC and TusD. The TusBCD complex interacts with TusE.

Its subcellular location is the cytoplasm. Part of a sulfur-relay system required for 2-thiolation of 5-methylaminomethyl-2-thiouridine (mnm(5)s(2)U) at tRNA wobble positions. The protein is Protein TusC of Cronobacter sakazakii (strain ATCC BAA-894) (Enterobacter sakazakii).